Here is a 133-residue protein sequence, read N- to C-terminus: Small ribosomal subunit protein eS24y (133 aa).

The disordered stretch occupies residues K104–K133. Over residues I109–T125 the composition is skewed to basic residues.

It belongs to the eukaryotic ribosomal protein eS24 family.

The polypeptide is Small ribosomal subunit protein eS24y (RPS24B) (Arabidopsis thaliana (Mouse-ear cress)).